The sequence spans 1243 residues: Probable phospholipid-transporting ATPase 7 (1243 aa).

Residues 1 to 74 lie on the Cytoplasmic side of the membrane; the sequence is MGRRRIRSRI…TTRYNLITFL (74 aa). A helical membrane pass occupies residues 75-96; the sequence is PKCLYEQFHRVANFYFLVAAIL. Topologically, residues 97–100 are extracellular; it reads SVFP. Residues 101–123 form a helical membrane-spanning segment; sequence LSPFNKWSMIAPLIFVVGLSMGK. Over 124 to 305 the chain is Cytoplasmic; the sequence is EALEDWRRFM…SRIEKRMDYI (182 aa). A helical membrane pass occupies residues 306-327; the sequence is IYTLFALLVLVSFISSLGFAVM. Residues 328-359 lie on the Extracellular side of the membrane; the sequence is TKMHMGDWWYLRPDKPERLTNPRNPFHAWVVH. The helical transmembrane segment at 360-377 threads the bilayer; the sequence is LITAVLLYGYLIPISLYV. Residues 378-941 lie on the Cytoplasmic side of the membrane; that stretch reads SIELVKVLQA…HGHWCYKRIA (564 aa). The active-site 4-aspartylphosphate intermediate is aspartate 425. A Glycyl lysine isopeptide (Lys-Gly) (interchain with G-Cter in ubiquitin) cross-link involves residue lysine 623. Mg(2+)-binding residues include aspartate 886 and aspartate 890. Residues 942–961 traverse the membrane as a helical segment; that stretch reads QMICYFFYKNITFGLTLFYF. Residues 962-975 are Extracellular-facing; that stretch reads EAFTGFSGQAIYND. A helical membrane pass occupies residues 976 to 995; it reads SYLLLFNVILTSLPVIALGV. Topologically, residues 996-1025 are cytoplasmic; the sequence is FEQDVSSEVCLQFPALYQQGPKNLFFDWYR. Residues 1026–1048 traverse the membrane as a helical segment; it reads IIGWMANGVYASVVIFSLNIGIF. Topologically, residues 1049-1061 are extracellular; that stretch reads HVQSFCSGGQTAD. A helical transmembrane segment spans residues 1062–1084; it reads MDAMGTAMFTCIIWAVNVQIALT. Over 1085-1090 the chain is Cytoplasmic; sequence MSHFTW. Residues 1091–1111 form a helical membrane-spanning segment; it reads IQHVLIWGSIVTWYIFLALFG. The Extracellular portion of the chain corresponds to 1112–1128; sequence MLPPKVSGNIFHMLSET. A helical transmembrane segment spans residues 1129–1153; sequence LAPAPIFWLTSLLVIAATTLPYLAY. Topologically, residues 1154-1243 are cytoplasmic; the sequence is ISFQRSLNPL…TDTTSTTQHS (90 aa).

It belongs to the cation transport ATPase (P-type) (TC 3.A.3) family. Type IV subfamily.

Its subcellular location is the cell membrane. It is found in the endomembrane system. The enzyme catalyses ATP + H2O + phospholipidSide 1 = ADP + phosphate + phospholipidSide 2.. Involved in transport of phospholipids and in regulation of pollen plasma membrane lipid asymmetry. This Arabidopsis thaliana (Mouse-ear cress) protein is Probable phospholipid-transporting ATPase 7.